The sequence spans 105 residues: T cell receptor alpha variable 40 (105 aa).

Residues 1–19 form the signal peptide; that stretch reads MNSSLDFLILILMFGGTSS. The region spanning 20-105 is the Ig-like domain; that stretch reads NSVKQTGQIT…DSAVYYCLLG (86 aa). N39 carries N-linked (GlcNAc...) asparagine glycosylation. An intrachain disulfide couples C40 to C102.

As to quaternary structure, alpha-beta TR is a heterodimer composed of an alpha and beta chain; disulfide-linked. The alpha-beta TR is associated with the transmembrane signaling CD3 coreceptor proteins to form the TR-CD3 (TcR or TCR). The assembly of alpha-beta TR heterodimers with CD3 occurs in the endoplasmic reticulum where a single alpha-beta TR heterodimer associates with one CD3D-CD3E heterodimer, one CD3G-CD3E heterodimer and one CD247 homodimer forming a stable octameric structure. CD3D-CD3E and CD3G-CD3E heterodimers preferentially associate with TR alpha and TR beta chains, respectively. The association of the CD247 homodimer is the last step of TcR assembly in the endoplasmic reticulum and is required for transport to the cell surface.

The protein localises to the cell membrane. Functionally, v region of the variable domain of T cell receptor (TR) alpha chain that participates in the antigen recognition. Alpha-beta T cell receptors are antigen specific receptors which are essential to the immune response and are present on the cell surface of T lymphocytes. Recognize peptide-major histocompatibility (MH) (pMH) complexes that are displayed by antigen presenting cells (APC), a prerequisite for efficient T cell adaptive immunity against pathogens. Binding of alpha-beta TR to pMH complex initiates TR-CD3 clustering on the cell surface and intracellular activation of LCK that phosphorylates the ITAM motifs of CD3G, CD3D, CD3E and CD247 enabling the recruitment of ZAP70. In turn ZAP70 phosphorylates LAT, which recruits numerous signaling molecules to form the LAT signalosome. The LAT signalosome propagates signal branching to three major signaling pathways, the calcium, the mitogen-activated protein kinase (MAPK) kinase and the nuclear factor NF-kappa-B (NF-kB) pathways, leading to the mobilization of transcription factors that are critical for gene expression and essential for T cell growth and differentiation. The T cell repertoire is generated in the thymus, by V-(D)-J rearrangement. This repertoire is then shaped by intrathymic selection events to generate a peripheral T cell pool of self-MH restricted, non-autoaggressive T cells. Post-thymic interaction of alpha-beta TR with the pMH complexes shapes TR structural and functional avidity. In Homo sapiens (Human), this protein is T cell receptor alpha variable 40.